A 139-amino-acid chain; its full sequence is Large ribosomal subunit protein uL16 (139 aa).

Basic residues predominate over residues 1–17; it reads MLIPRRTKHRKQHHPRR. Positions 1-24 are disordered; sequence MLIPRRTKHRKQHHPRRTGAASGG.

Belongs to the universal ribosomal protein uL16 family. Part of the 50S ribosomal subunit.

Its function is as follows. Binds 23S rRNA and is also seen to make contacts with the A and possibly P site tRNAs. This is Large ribosomal subunit protein uL16 from Beutenbergia cavernae (strain ATCC BAA-8 / DSM 12333 / CCUG 43141 / JCM 11478 / NBRC 16432 / NCIMB 13614 / HKI 0122).